A 199-amino-acid polypeptide reads, in one-letter code: Fe/S biogenesis protein NfuA (199 aa).

Positions 151 and 154 each coordinate [4Fe-4S] cluster.

It belongs to the NfuA family. In terms of assembly, homodimer. [4Fe-4S] cluster is required as a cofactor.

Involved in iron-sulfur cluster biogenesis. Binds a 4Fe-4S cluster, can transfer this cluster to apoproteins, and thereby intervenes in the maturation of Fe/S proteins. Could also act as a scaffold/chaperone for damaged Fe/S proteins. The protein is Fe/S biogenesis protein NfuA of Xanthomonas oryzae pv. oryzae (strain PXO99A).